The following is a 208-amino-acid chain: MKVISSEIVISAVAPKQYPENGLPEIALAGRSNVGKSSTVNTILKRRKLARVSASPGKTRTINFYIVNNEFHIVDLPGYGYAKVSKGEKETWGKMMETYLSSRKNLYEVILLVDIRHEPTADDKMMYDWIKHYGYGSIVIATKSDKISRGAYQKHFKMIREKLGMSPEDKIIPISSLKREGIDKLWHSIEEIFIANNLPITIEEAEEY.

One can recognise an EngB-type G domain in the interval 22-195 (GLPEIALAGR…WHSIEEIFIA (174 aa)). Residues 30-37 (GRSNVGKS), 57-61 (GKTRT), 75-78 (DLPG), 142-145 (TKSD), and 174-176 (ISS) each bind GTP. S37 and T59 together coordinate Mg(2+).

The protein belongs to the TRAFAC class TrmE-Era-EngA-EngB-Septin-like GTPase superfamily. EngB GTPase family. Requires Mg(2+) as cofactor.

Functionally, necessary for normal cell division and for the maintenance of normal septation. This Alkaliphilus oremlandii (strain OhILAs) (Clostridium oremlandii (strain OhILAs)) protein is Probable GTP-binding protein EngB.